The chain runs to 338 residues: D-erythrose-4-phosphate dehydrogenase (338 aa).

12–13 (RI) lines the NAD(+) pocket. Residues 154 to 156 (SCT), Arg-200, 213 to 214 (TK), and Arg-236 contribute to the substrate site. The active-site Nucleophile is Cys-155. An NAD(+)-binding site is contributed by Asn-318.

Belongs to the glyceraldehyde-3-phosphate dehydrogenase family. Epd subfamily. Homotetramer.

Its subcellular location is the cytoplasm. It carries out the reaction D-erythrose 4-phosphate + NAD(+) + H2O = 4-phospho-D-erythronate + NADH + 2 H(+). It functions in the pathway cofactor biosynthesis; pyridoxine 5'-phosphate biosynthesis; pyridoxine 5'-phosphate from D-erythrose 4-phosphate: step 1/5. Functionally, catalyzes the NAD-dependent conversion of D-erythrose 4-phosphate to 4-phosphoerythronate. In Yersinia pestis bv. Antiqua (strain Antiqua), this protein is D-erythrose-4-phosphate dehydrogenase.